The following is a 160-amino-acid chain: Transcriptional repressor NrdR (160 aa).

A zinc finger lies at 3–34; it reads CPYCQYEDTQVKDSRPVEEGAVIRRRRVCPVC. The ATP-cone domain maps to 49-139; that stretch reads LLVSKKSGRC…VYRDFRNASD (91 aa).

The protein belongs to the NrdR family. The cofactor is Zn(2+).

Functionally, negatively regulates transcription of bacterial ribonucleotide reductase nrd genes and operons by binding to NrdR-boxes. The chain is Transcriptional repressor NrdR from Bartonella quintana (strain Toulouse) (Rochalimaea quintana).